The primary structure comprises 38 residues: Large ribosomal subunit protein bL36 (38 aa).

This sequence belongs to the bacterial ribosomal protein bL36 family.

The protein is Large ribosomal subunit protein bL36 of Saccharophagus degradans (strain 2-40 / ATCC 43961 / DSM 17024).